The primary structure comprises 462 residues: Argininosuccinate lyase (462 aa).

The protein belongs to the lyase 1 family. Argininosuccinate lyase subfamily.

Its subcellular location is the cytoplasm. The catalysed reaction is 2-(N(omega)-L-arginino)succinate = fumarate + L-arginine. Its pathway is amino-acid biosynthesis; L-arginine biosynthesis; L-arginine from L-ornithine and carbamoyl phosphate: step 3/3. The polypeptide is Argininosuccinate lyase (Bacillus cytotoxicus (strain DSM 22905 / CIP 110041 / 391-98 / NVH 391-98)).